The chain runs to 1260 residues: Methionine synthase (1260 aa).

In terms of domain architecture, Hcy-binding spans Phe13–Ile333. Zn(2+) contacts are provided by Cys255, Cys318, and Cys319. A Pterin-binding domain is found at Phe364–Glu625. The 95-residue stretch at Glu655–Arg749 folds into the B12-binding N-terminal domain. Methylcob(III)alamin-binding positions include Glu699, Gly775–Asp779, His778, Ser823, Thr827, and Ala879. The B12-binding domain occupies Gly766–Val883. The AdoMet activation domain maps to Ser916–Leu1256. S-adenosyl-L-methionine contacts are provided by residues Asp966, Arg1163, and Tyr1218–Phe1219.

The protein belongs to the vitamin-B12 dependent methionine synthase family. Methylcob(III)alamin serves as cofactor. Zn(2+) is required as a cofactor.

It catalyses the reaction (6S)-5-methyl-5,6,7,8-tetrahydrofolate + L-homocysteine = (6S)-5,6,7,8-tetrahydrofolate + L-methionine. It functions in the pathway amino-acid biosynthesis; L-methionine biosynthesis via de novo pathway; L-methionine from L-homocysteine (MetH route): step 1/1. Functionally, catalyzes the transfer of a methyl group from methyl-cobalamin to homocysteine, yielding enzyme-bound cob(I)alamin and methionine. Subsequently, remethylates the cofactor using methyltetrahydrofolate. The sequence is that of Methionine synthase (mtr) from Dictyostelium discoideum (Social amoeba).